The chain runs to 329 residues: D-alanine--D-alanine ligase (329 aa).

The region spanning 120-326 (KLWLSAIGIP…FADYLEQILR (207 aa)) is the ATP-grasp domain. 150–205 (ALAKWGKVFIKAASQGSSVGCYSASNEADLVKGIADAFGYSEQVLIEKAVKPRELE) serves as a coordination point for ATP. Mg(2+) is bound by residues Asp-280, Glu-293, and Asn-295.

The protein belongs to the D-alanine--D-alanine ligase family. Mg(2+) serves as cofactor. It depends on Mn(2+) as a cofactor.

Its subcellular location is the cytoplasm. The catalysed reaction is 2 D-alanine + ATP = D-alanyl-D-alanine + ADP + phosphate + H(+). Its pathway is cell wall biogenesis; peptidoglycan biosynthesis. Its function is as follows. Cell wall formation. The polypeptide is D-alanine--D-alanine ligase (Aeromonas hydrophila subsp. hydrophila (strain ATCC 7966 / DSM 30187 / BCRC 13018 / CCUG 14551 / JCM 1027 / KCTC 2358 / NCIMB 9240 / NCTC 8049)).